Consider the following 235-residue polypeptide: Type II secretion system protein N (235 aa).

Residues methionine 1–alanine 34 lie on the Cytoplasmic side of the membrane. Residues leucine 35–tryptophan 55 traverse the membrane as a helical; Signal-anchor for type II membrane protein segment. Residues leucine 56–aspartate 235 are Periplasmic-facing. The tract at residues aspartate 205–aspartate 235 is disordered. Residues glutamate 226–aspartate 235 are compositionally biased toward low complexity.

It is found in the cell inner membrane. Functionally, involved in a type II secretion system (T2SS, formerly general secretion pathway, GSP) for the export of proteins. Required for the translocation of a variety of enzymes across the outer membrane. This Pseudomonas aeruginosa (strain ATCC 15692 / DSM 22644 / CIP 104116 / JCM 14847 / LMG 12228 / 1C / PRS 101 / PAO1) protein is Type II secretion system protein N (xcpP).